We begin with the raw amino-acid sequence, 513 residues long: Dye-decolorizing peroxidase msp1 (513 aa).

The signal sequence occupies residues 1 to 20; the sequence is MKLFSASVFAAIIASHYASA. A propeptide spanning residues 21 to 55 is cleaved from the precursor; it reads TAHIRAPNVKPRRTNSLLTAPPQQPPLPSAQQAAS. The tract at residues 33 to 52 is disordered; that stretch reads RTNSLLTAPPQQPPLPSAQQ. Aspartate 228 functions as the Proton acceptor in the catalytic mechanism. Histidine 365 provides a ligand contact to heme.

As to quaternary structure, homodimer. Heme b serves as cofactor.

The protein localises to the secreted. The catalysed reaction is Reactive Blue 5 + 2 H2O2 = 2,2'-disulfonyl azobenzene + 3-[(4-amino-6-chloro-1,3,5-triazin-2-yl)amino]benzenesulfonate + phthalate + 2 H2O + 2 H(+). The enzyme catalyses 2 a phenolic donor + H2O2 = 2 a phenolic radical donor + 2 H2O. Functionally, manganese-independent peroxidase that is able to convert a large number of compounds, but its physiological substrate is not known. In addition to classic peroxidase substrates (e.g. 2,6-dimethoxyphenol), oxidizes dyes such as Reactive Blue 5. Also degrades beta-carotene. The protein is Dye-decolorizing peroxidase msp1 of Mycetinis scorodonius (Garlic mushroom).